We begin with the raw amino-acid sequence, 299 residues long: Taste receptor type 2 member 5 (299 aa).

Position 1 (M1) is a topological domain, extracellular. A helical transmembrane segment spans residues 2 to 22 (LSAGLGLLMLVAVVEFLIGLI). Over 23-45 (GNGVLVVWSFREWMRKFNWSSYN) the chain is Cytoplasmic. Residues 46-66 (LIILGLAGCRFLLQWLIILDL) traverse the membrane as a helical segment. Residues 67–82 (SLFPLFQSSRWLRYLS) are Extracellular-facing. The chain crosses the membrane as a helical span at residues 83 to 103 (IFWVLVSQASLWFATFLSVFY). Residues 104–127 (CKKITTFDRPAYLWLKQRAYNLSL) lie on the Cytoplasmic side of the membrane. A helical transmembrane segment spans residues 128-148 (WCLLGYFIINLLLTVQIGLMF). At 149-175 (YHPPQGNSSIRYPFESWQYLYAFRLNS) the chain is on the extracellular side. Residue N155 is glycosylated (N-linked (GlcNAc...) asparagine). Residues 176–196 (GSYLPLMVFLVSSGMLIVSLY) form a helical membrane-spanning segment. Topologically, residues 197-223 (THHKKMKVHSAGRRDVRAKAHITALKS) are cytoplasmic. The helical transmembrane segment at 224-244 (LGCFLFLHLVYIMASPFSITS) threads the bilayer. Residues 245 to 253 (KTYPPDLTS) lie on the Extracellular side of the membrane. Residues 254-274 (VFIWETLMAAYPSLHSLILIM) traverse the membrane as a helical segment. The Cytoplasmic segment spans residues 275–299 (GIPRVKQTCQKILWKTVCARRCWGP).

The protein belongs to the G-protein coupled receptor T2R family.

It localises to the membrane. Receptor that may play a role in the perception of bitterness and is gustducin-linked. May play a role in sensing the chemical composition of the gastrointestinal content. The activity of this receptor may stimulate alpha gustducin, mediate PLC-beta-2 activation and lead to the gating of TRPM5. This chain is Taste receptor type 2 member 5 (TAS2R5), found in Gorilla gorilla gorilla (Western lowland gorilla).